The sequence spans 323 residues: Replication factor C subunit 4 (323 aa).

ATP-binding positions include valine 12, valine 24, glycine 49–threonine 57, asparagine 145, and arginine 203.

This sequence belongs to the activator 1 small subunits family. Replication factor C (RFC) is a heteropentamer of subunits RFC1, RFC2, RFC3, RFC4 and RFC5 and forms a complex with POL30/PCNA in the presence of ATP. Component of the RAD24-RFC complex which consists of RAD14, RFC2, RFC3, RFC4 and RFC5 and associates with the checkpoint clamp DDC1:MEC3:RAD17 complex. Component of the ELG1-RFC complex which consists of ELG1, RFC2, RFC3, RFC4 and RFC5. Component of the CTF18-RFC complex, which consists of CTF18, CTF8, DCC1, RFC2, RFC3, RFC4 and RFC5. RFC4 interacts with ECO1.

The protein localises to the nucleus. Functionally, component of ATP-dependent clamp loader (RFC and RFC-like) complexes for DNA clamps, such as the POL30/PCNA homotrimer and the checkpoint clamp DDC1:MEC3:RAD17 complex. During a clamp loading circle, the RFC:clamp complex binds to DNA and the recognition of the double-stranded/single-stranded junction stimulates ATP hydrolysis by RFC. The complex presumably provides bipartite ATP sites in which one subunit supplies a catalytic site for hydrolysis of ATP bound to the neighboring subunit. Dissociation of RFC from the clamp leaves the clamp encircling DNA. Component of the replication factor C (RFC or activator 1) complex which loads POL30/PCNA and acts during elongation of primed DNA templates by DNA polymerase delta and epsilon. RFC has an essential but redundant activity in sister chromatid cohesion establishment. Component of the RFC-like complex CTF18-RFC which is required for efficient establishment of chromosome cohesion during S-phase and may load or unload POL30/PCNA. Component of the RFC-like RAD24-RFC complex which loads the checkpoint clamp DDC1:MEC3:RAD17 complex and is involved in DNA repair pathways. Component of the RFC-like ELG1-RFC complex which appears to have a role in DNA replication, replication fork re-start, recombination and repair. This chain is Replication factor C subunit 4 (RFC4), found in Saccharomyces cerevisiae (strain ATCC 204508 / S288c) (Baker's yeast).